A 212-amino-acid polypeptide reads, in one-letter code: MRIFILGRTKYQEAWALMKRIHDEVASGVSEEMILVTEHDHVITVGRHGRLNNVLRRELPIYVVERGGDATYHGPGQAVVYPVVRLRGGVRSYLWALEEAVIRTLDKYGISAGRREDHRGVWVGGKKIASVGIAVERGVAYHGVAVYVNPHMEYFYHINPCGLPPSVITSMRQLGVEADVFEVGYAVAANLETLLQRQERLKTRCESLRRIP.

A BPL/LPL catalytic domain is found at 28-199; sequence GVSEEMILVT…NLETLLQRQE (172 aa). Substrate-binding positions include 66 to 73, 130 to 132, and 143 to 145; these read RGGDATYH, SVG, and GVA. The active-site Acyl-thioester intermediate is the Cys161.

The protein belongs to the LipB family.

The protein localises to the cytoplasm. The catalysed reaction is octanoyl-[ACP] + L-lysyl-[protein] = N(6)-octanoyl-L-lysyl-[protein] + holo-[ACP] + H(+). Its pathway is protein modification; protein lipoylation via endogenous pathway; protein N(6)-(lipoyl)lysine from octanoyl-[acyl-carrier-protein]: step 1/2. In terms of biological role, catalyzes the transfer of endogenously produced octanoic acid from octanoyl-acyl-carrier-protein onto the lipoyl domains of lipoate-dependent enzymes. Lipoyl-ACP can also act as a substrate although octanoyl-ACP is likely to be the physiological substrate. The sequence is that of Probable octanoyltransferase from Pyrobaculum arsenaticum (strain DSM 13514 / JCM 11321 / PZ6).